The primary structure comprises 159 residues: 2-C-methyl-D-erythritol 2,4-cyclodiphosphate synthase (159 aa).

D8 and H10 together coordinate a divalent metal cation. 4-CDP-2-C-methyl-D-erythritol 2-phosphate is bound by residues 8-10 and 34-35; these read DVH and HS. H42 is an a divalent metal cation binding site. 4-CDP-2-C-methyl-D-erythritol 2-phosphate-binding positions include 56-58, 61-65, 132-135, F139, and R142; these read DIG, FPDTD, and TTTE.

Belongs to the IspF family. In terms of assembly, homotrimer. It depends on a divalent metal cation as a cofactor.

The enzyme catalyses 4-CDP-2-C-methyl-D-erythritol 2-phosphate = 2-C-methyl-D-erythritol 2,4-cyclic diphosphate + CMP. The protein operates within isoprenoid biosynthesis; isopentenyl diphosphate biosynthesis via DXP pathway; isopentenyl diphosphate from 1-deoxy-D-xylulose 5-phosphate: step 4/6. Involved in the biosynthesis of isopentenyl diphosphate (IPP) and dimethylallyl diphosphate (DMAPP), two major building blocks of isoprenoid compounds. Catalyzes the conversion of 4-diphosphocytidyl-2-C-methyl-D-erythritol 2-phosphate (CDP-ME2P) to 2-C-methyl-D-erythritol 2,4-cyclodiphosphate (ME-CPP) with a corresponding release of cytidine 5-monophosphate (CMP). This Finegoldia magna (strain ATCC 29328 / DSM 20472 / WAL 2508) (Peptostreptococcus magnus) protein is 2-C-methyl-D-erythritol 2,4-cyclodiphosphate synthase.